We begin with the raw amino-acid sequence, 294 residues long: Cytidine deaminase (294 aa).

2 CMP/dCMP-type deaminase domains span residues 48–168 (DEDA…FGPK) and 186–294 (LTGD…VLLG). 89–91 (NME) contacts substrate. Residue His-102 participates in Zn(2+) binding. Catalysis depends on Glu-104, which acts as the Proton donor. Zn(2+) is bound by residues Cys-129 and Cys-132.

The protein belongs to the cytidine and deoxycytidylate deaminase family. Homodimer. Requires Zn(2+) as cofactor.

The enzyme catalyses cytidine + H2O + H(+) = uridine + NH4(+). It carries out the reaction 2'-deoxycytidine + H2O + H(+) = 2'-deoxyuridine + NH4(+). This enzyme scavenges exogenous and endogenous cytidine and 2'-deoxycytidine for UMP synthesis. This is Cytidine deaminase from Salmonella schwarzengrund (strain CVM19633).